We begin with the raw amino-acid sequence, 299 residues long: Ribosomal RNA small subunit methyltransferase H (299 aa).

S-adenosyl-L-methionine-binding positions include 24–26, D43, F68, D90, and Q97; that span reads GGH.

It belongs to the methyltransferase superfamily. RsmH family.

It localises to the cytoplasm. It catalyses the reaction cytidine(1402) in 16S rRNA + S-adenosyl-L-methionine = N(4)-methylcytidine(1402) in 16S rRNA + S-adenosyl-L-homocysteine + H(+). Its function is as follows. Specifically methylates the N4 position of cytidine in position 1402 (C1402) of 16S rRNA. The protein is Ribosomal RNA small subunit methyltransferase H of Francisella tularensis subsp. tularensis (strain WY96-3418).